The chain runs to 440 residues: Trigger factor (440 aa).

Positions 163 to 248 (GDGVTVDFEG…VKKIESAHLP (86 aa)) constitute a PPIase FKBP-type domain.

The protein belongs to the FKBP-type PPIase family. Tig subfamily.

Its subcellular location is the cytoplasm. It carries out the reaction [protein]-peptidylproline (omega=180) = [protein]-peptidylproline (omega=0). Involved in protein export. Acts as a chaperone by maintaining the newly synthesized protein in an open conformation. Functions as a peptidyl-prolyl cis-trans isomerase. This chain is Trigger factor, found in Verminephrobacter eiseniae (strain EF01-2).